The chain runs to 249 residues: 5'-nucleotidase SurE (249 aa).

Aspartate 8, aspartate 9, serine 39, and asparagine 91 together coordinate a divalent metal cation.

The protein belongs to the SurE nucleotidase family. A divalent metal cation is required as a cofactor.

It is found in the cytoplasm. It carries out the reaction a ribonucleoside 5'-phosphate + H2O = a ribonucleoside + phosphate. In terms of biological role, nucleotidase that shows phosphatase activity on nucleoside 5'-monophosphates. The chain is 5'-nucleotidase SurE from Pseudomonas savastanoi pv. phaseolicola (strain 1448A / Race 6) (Pseudomonas syringae pv. phaseolicola (strain 1448A / Race 6)).